Consider the following 784-residue polypeptide: Homoaconitase, mitochondrial (784 aa).

The transit peptide at 1-32 directs the protein to the mitochondrion; that stretch reads MIHPVRRALAVAASRAPRQFLAAASRTTSVRS. The [4Fe-4S] cluster site is built by cysteine 399, cysteine 468, and cysteine 471. The segment at 572–596 is disordered; sequence EAGLTPESTSSSSSSSSSSEEESLT. The segment covering 578-589 has biased composition (low complexity); that stretch reads ESTSSSSSSSSS.

Belongs to the aconitase/IPM isomerase family. The cofactor is [4Fe-4S] cluster.

The protein localises to the mitochondrion. The catalysed reaction is (2R,3S)-homoisocitrate = cis-homoaconitate + H2O. The protein operates within amino-acid biosynthesis; L-lysine biosynthesis via AAA pathway; L-alpha-aminoadipate from 2-oxoglutarate: step 3/5. Catalyzes the reversible hydration of cis-homoaconitate to (2R,3S)-homoisocitrate, a step in the alpha-aminoadipate pathway for lysine biosynthesis. The chain is Homoaconitase, mitochondrial (lys-4) from Neurospora crassa (strain ATCC 24698 / 74-OR23-1A / CBS 708.71 / DSM 1257 / FGSC 987).